A 515-amino-acid polypeptide reads, in one-letter code: Maturase K (515 aa).

It belongs to the intron maturase 2 family. MatK subfamily.

It is found in the plastid. The protein localises to the chloroplast. Usually encoded in the trnK tRNA gene intron. Probably assists in splicing its own and other chloroplast group II introns. In Pinus pumila (Dwarf Siberian pine), this protein is Maturase K.